We begin with the raw amino-acid sequence, 346 residues long: 4-hydroxy-2-oxovalerate aldolase (346 aa).

The Pyruvate carboxyltransferase domain maps to 8-260; sequence VTVHDMTLRD…ETGVDVFKIQ (253 aa). A substrate-binding site is contributed by 16 to 17; that stretch reads RD. A Mn(2+)-binding site is contributed by Asp-17. The active-site Proton acceptor is His-20. Residues Ser-170 and His-199 each contribute to the substrate site. Residues His-199 and His-201 each coordinate Mn(2+). Substrate is bound at residue Tyr-290.

This sequence belongs to the 4-hydroxy-2-oxovalerate aldolase family.

It catalyses the reaction (S)-4-hydroxy-2-oxopentanoate = acetaldehyde + pyruvate. This Polaromonas naphthalenivorans (strain CJ2) protein is 4-hydroxy-2-oxovalerate aldolase.